Consider the following 284-residue polypeptide: Bifunctional protein FolD (284 aa).

NADP(+) is bound by residues 166–168 and Ile-232; that span reads GAS.

It belongs to the tetrahydrofolate dehydrogenase/cyclohydrolase family. In terms of assembly, homodimer.

It catalyses the reaction (6R)-5,10-methylene-5,6,7,8-tetrahydrofolate + NADP(+) = (6R)-5,10-methenyltetrahydrofolate + NADPH. It carries out the reaction (6R)-5,10-methenyltetrahydrofolate + H2O = (6R)-10-formyltetrahydrofolate + H(+). It functions in the pathway one-carbon metabolism; tetrahydrofolate interconversion. Its function is as follows. Catalyzes the oxidation of 5,10-methylenetetrahydrofolate to 5,10-methenyltetrahydrofolate and then the hydrolysis of 5,10-methenyltetrahydrofolate to 10-formyltetrahydrofolate. In Shewanella pealeana (strain ATCC 700345 / ANG-SQ1), this protein is Bifunctional protein FolD.